The sequence spans 156 residues: Ribosomal RNA large subunit methyltransferase H (156 aa).

S-adenosyl-L-methionine is bound by residues L73, G104, and 123–128; that span reads VSSLTL.

This sequence belongs to the RNA methyltransferase RlmH family. Homodimer.

The protein localises to the cytoplasm. It carries out the reaction pseudouridine(1915) in 23S rRNA + S-adenosyl-L-methionine = N(3)-methylpseudouridine(1915) in 23S rRNA + S-adenosyl-L-homocysteine + H(+). Its function is as follows. Specifically methylates the pseudouridine at position 1915 (m3Psi1915) in 23S rRNA. This chain is Ribosomal RNA large subunit methyltransferase H, found in Burkholderia mallei (strain NCTC 10247).